Reading from the N-terminus, the 375-residue chain is E3 ubiquitin-protein ligase RNF34 (375 aa).

Residues E56 to E107 form an FYVE-type zinc finger. The SAP 1 domain maps to L115–I134. S169 is subject to Phosphoserine. A disordered region spans residues R202 to T250. Acidic residues predominate over residues T221–L242. A phosphoserine mark is found at S257 and S259. In terms of domain architecture, SAP 2 spans V267–R281. An RING-type zinc finger spans residues C328–R363.

As to quaternary structure, interacts with CASP8 and CASP10. Interacts with p53/TP53; involved in p53/TP53 ubiquitination. Interacts (via RING-type zinc finger) with MDM2; the interaction stabilizes MDM2. Interacts (via RING-type zinc finger) with PPARGC1A. Interacts with NOD1. In terms of processing, autoubiquitinated (in vitro). Post-translationally, proteolytically cleaved by caspases upon induction of apoptosis by TNF.

Its subcellular location is the cell membrane. The protein localises to the endomembrane system. The protein resides in the nucleus. It localises to the nucleus speckle. It is found in the cytoplasm. Its subcellular location is the cytosol. The enzyme catalyses S-ubiquitinyl-[E2 ubiquitin-conjugating enzyme]-L-cysteine + [acceptor protein]-L-lysine = [E2 ubiquitin-conjugating enzyme]-L-cysteine + N(6)-ubiquitinyl-[acceptor protein]-L-lysine.. It participates in protein modification; protein ubiquitination. In terms of biological role, E3 ubiquitin-protein ligase that regulates several biological processes through the ubiquitin-mediated proteasomal degradation of various target proteins. Ubiquitinates the caspases CASP8 and CASP10, promoting their proteasomal degradation, to negatively regulate cell death downstream of death domain receptors in the extrinsic pathway of apoptosis. May mediate 'Lys-48'-linked polyubiquitination of RIPK1 and its subsequent proteasomal degradation thereby indirectly regulating the tumor necrosis factor-mediated signaling pathway. Negatively regulates p53/TP53 through its direct ubiquitination and targeting to proteasomal degradation. Indirectly, may also negatively regulate p53/TP53 through ubiquitination and degradation of SFN. Mediates PPARGC1A proteasomal degradation probably through ubiquitination thereby indirectly regulating the metabolism of brown fat cells. Possibly involved in innate immunity, through 'Lys-48'-linked polyubiquitination of NOD1 and its subsequent proteasomal degradation. This chain is E3 ubiquitin-protein ligase RNF34 (RNF34), found in Bos taurus (Bovine).